Here is a 569-residue protein sequence, read N- to C-terminus: Carboxylesterase 3 (569 aa).

The signal sequence occupies residues 1-24 (MRLHRLRARLNAVAFGLLLLLVHG). A disulfide bridge connects residues C95 and C122. N103 carries N-linked (GlcNAc...) asparagine glycosylation. S227 functions as the Acyl-ester intermediate in the catalytic mechanism. A disulfide bridge links C279 with C290. Residues E345 and H458 each act as charge relay system in the active site. The Prevents secretion from ER signature appears at 566-569 (QEDL).

The protein belongs to the type-B carboxylesterase/lipase family. N-glycosylated.

The protein resides in the endoplasmic reticulum lumen. It catalyses the reaction a carboxylic ester + H2O = an alcohol + a carboxylate + H(+). Its function is as follows. Involved in the detoxification of xenobiotics and in the activation of ester and amide prodrugs. The polypeptide is Carboxylesterase 3 (CES3) (Pongo abelii (Sumatran orangutan)).